The primary structure comprises 684 residues: Glycine--tRNA ligase beta subunit (684 aa).

The protein belongs to the class-II aminoacyl-tRNA synthetase family. Tetramer of two alpha and two beta subunits.

It localises to the cytoplasm. The catalysed reaction is tRNA(Gly) + glycine + ATP = glycyl-tRNA(Gly) + AMP + diphosphate. The protein is Glycine--tRNA ligase beta subunit of Pseudomonas fluorescens (strain Pf0-1).